Consider the following 355-residue polypeptide: Peptide chain release factor 1 (355 aa).

N5-methylglutamine is present on Q232. Residues 282-309 (EQNASISAERKSQVGSGDRSERIRTYNY) form a disordered region. Basic and acidic residues predominate over residues 289–305 (AERKSQVGSGDRSERIR).

The protein belongs to the prokaryotic/mitochondrial release factor family. Methylated by PrmC. Methylation increases the termination efficiency of RF1.

The protein localises to the cytoplasm. Functionally, peptide chain release factor 1 directs the termination of translation in response to the peptide chain termination codons UAG and UAA. The polypeptide is Peptide chain release factor 1 (Desulfatibacillum aliphaticivorans).